The primary structure comprises 801 residues: Phosphatidylinositol 4-kinase beta (801 aa).

3 disordered regions span residues 1–29 (MGDTAVEPAPLKPASEPAPGPPGNNGGSL), 101–121 (EDEMGATVTSGTAKGARRRRQ), and 250–304 (RKRE…EDEP). At Gly2 the chain carries N-acetylglycine. Positions 2–68 (GDTAVEPAPL…VRLLHGAVAV (67 aa)) are interaction with ACBD3. The PIK helical domain occupies 29 to 242 (LLSVITEGVG…GTKLRKLILS (214 aa)). Ser258 bears the Phosphoserine mark. The span at 259-268 (PALNTGLSPS) shows a compositional bias: polar residues. Thr263 bears the Phosphothreonine mark. 6 positions are modified to phosphoserine: Ser266, Ser275, Ser277, Ser284, Ser294, and Ser413. Residues 278 to 294 (DATASISLSSSLKRTAS) are compositionally biased toward low complexity. At Thr423 the chain carries Phosphothreonine. At Ser496 the chain carries Phosphoserine. Phosphothreonine occurs at positions 502 and 504. Residues 520–786 (EPWQEKVRRI…MVDGSMRSIT (267 aa)) enclose the PI3K/PI4K catalytic domain. A G-loop region spans residues 526 to 532 (VRRIREG). A catalytic loop region spans residues 653–661 (QVKDRHNGN). An activation loop region spans residues 672–696 (HIDFGFILSSSPRNLGFETSAFKLT).

Belongs to the PI3/PI4-kinase family. Type III PI4K subfamily. As to quaternary structure, interacts with ARF1 and ARF3 in the Golgi complex, but not with ARF4, ARF5 or ARF6. Interacts with NCS1/FREQ in a calcium-independent manner. Interacts with CALN1/CABP8 and CALN2/CABP7; in a calcium-dependent manner; this interaction competes with NCS1/FREQ binding. Interacts with ACBD3. Interacts with ARMH3, YWHAB, YWHAE, YWHAG, YWHAH, YWHAQ, YWHAZ and SFN. Interacts with GGA2 (via VHS domain); the interaction is important for PI4KB location at the Golgi apparatus membrane. Interacts with ATG9A. It depends on Mg(2+) as a cofactor. Mn(2+) is required as a cofactor.

The protein resides in the endomembrane system. It localises to the mitochondrion outer membrane. Its subcellular location is the rough endoplasmic reticulum membrane. It is found in the golgi apparatus. The protein localises to the golgi apparatus membrane. It carries out the reaction a 1,2-diacyl-sn-glycero-3-phospho-(1D-myo-inositol) + ATP = a 1,2-diacyl-sn-glycero-3-phospho-(1D-myo-inositol 4-phosphate) + ADP + H(+). With respect to regulation, inhibited by wortmannin. Increased kinase activity upon interaction with NCS1/FREQ. Its function is as follows. Phosphorylates phosphatidylinositol (PI) in the first committed step in the production of the second messenger inositol-1,4,5,-trisphosphate (PIP). May regulate Golgi disintegration/reorganization during mitosis, possibly via its phosphorylation. Involved in Golgi-to-plasma membrane trafficking. May play an important role in the inner ear development. This Sorex araneus (Eurasian common shrew) protein is Phosphatidylinositol 4-kinase beta (PI4KB).